The sequence spans 338 residues: 1-aminocyclopropane-1-carboxylate deaminase (338 aa).

Lysine 51 carries the N6-(pyridoxal phosphate)lysine modification. Serine 78 serves as the catalytic Nucleophile.

Belongs to the ACC deaminase/D-cysteine desulfhydrase family. As to quaternary structure, homotrimer. Requires pyridoxal 5'-phosphate as cofactor.

The catalysed reaction is 1-aminocyclopropane-1-carboxylate + H2O = 2-oxobutanoate + NH4(+). In terms of biological role, catalyzes a cyclopropane ring-opening reaction, the irreversible conversion of 1-aminocyclopropane-1-carboxylate (ACC) to ammonia and alpha-ketobutyrate. Allows growth on ACC as a nitrogen source. In Pseudomonas syringae pv. tomato (strain ATCC BAA-871 / DC3000), this protein is 1-aminocyclopropane-1-carboxylate deaminase.